Here is a 227-residue protein sequence, read N- to C-terminus: Esterase Rv3036c (227 aa).

Residues 3 to 23 form a helical membrane-spanning segment; the sequence is YLIATAVLVAVVLVGWPAAGA.

Belongs to the RsiV family.

It is found in the cell membrane. The protein localises to the secreted. The protein resides in the cell wall. It carries out the reaction a fatty acid ester + H2O = an aliphatic alcohol + a fatty acid + H(+). The catalysed reaction is an acetyl ester + H2O = an aliphatic alcohol + acetate + H(+). It catalyses the reaction a butanoate ester + H2O = an aliphatic alcohol + butanoate + H(+). The enzyme catalyses a hexanoate ester + H2O = an aliphatic alcohol + hexanoate + H(+). It carries out the reaction a dodecanoate ester + H2O = an aliphatic alcohol + dodecanoate + H(+). The catalysed reaction is a tetradecanoate ester + H2O = an aliphatic alcohol + tetradecanoate + H(+). It catalyses the reaction an octanoate ester + H2O = an aliphatic alcohol + octanoate + H(+). Functionally, hydrolyzes ester substrates carbon chain lengths ranging from C2 to C14. In vitro, acetate (C2), butyrate (C4) and caprylate (C6) are hydrolyzed with high efficiency. Has lower activity against laurate (C12), myristate (C14) and caproate (C8), and weak activity against palmitate (C16). The chain is Esterase Rv3036c from Mycobacterium tuberculosis (strain ATCC 25618 / H37Rv).